The following is a 309-amino-acid chain: Ribose-phosphate pyrophosphokinase (309 aa).

ATP-binding positions include 37–39 (DGE) and 96–97 (RQ). Mg(2+) is bound by residues His130 and Asp169. Lys192 is a catalytic residue. Residues Arg194, Asp218, and 222–226 (DTAGT) each bind D-ribose 5-phosphate.

Belongs to the ribose-phosphate pyrophosphokinase family. Class I subfamily. Homohexamer. It depends on Mg(2+) as a cofactor.

It is found in the cytoplasm. It catalyses the reaction D-ribose 5-phosphate + ATP = 5-phospho-alpha-D-ribose 1-diphosphate + AMP + H(+). It functions in the pathway metabolic intermediate biosynthesis; 5-phospho-alpha-D-ribose 1-diphosphate biosynthesis; 5-phospho-alpha-D-ribose 1-diphosphate from D-ribose 5-phosphate (route I): step 1/1. Functionally, involved in the biosynthesis of the central metabolite phospho-alpha-D-ribosyl-1-pyrophosphate (PRPP) via the transfer of pyrophosphoryl group from ATP to 1-hydroxyl of ribose-5-phosphate (Rib-5-P). The protein is Ribose-phosphate pyrophosphokinase of Campylobacter jejuni subsp. jejuni serotype O:2 (strain ATCC 700819 / NCTC 11168).